Reading from the N-terminus, the 194-residue chain is Large ribosomal subunit protein uL22 (194 aa).

Belongs to the universal ribosomal protein uL22 family.

The protein is Large ribosomal subunit protein uL22 (rpl17) of Aspergillus fumigatus (strain ATCC MYA-4609 / CBS 101355 / FGSC A1100 / Af293) (Neosartorya fumigata).